We begin with the raw amino-acid sequence, 93 residues long: Small ribosomal subunit protein uS17 (93 aa).

It belongs to the universal ribosomal protein uS17 family. As to quaternary structure, part of the 30S ribosomal subunit.

In terms of biological role, one of the primary rRNA binding proteins, it binds specifically to the 5'-end of 16S ribosomal RNA. This chain is Small ribosomal subunit protein uS17, found in Rhodococcus jostii (strain RHA1).